The sequence spans 146 residues: Hemoglobin subunit beta (146 aa).

Val1 is subject to N-acetylvaline. Residues 2 to 146 enclose the Globin domain; sequence HLTADEKVSL…VANALAHKYH (145 aa). Phosphoserine is present on Ser44. The residue at position 59 (Lys59) is an N6-acetyllysine. His63 lines the heme b pocket. An N6-acetyllysine modification is found at Lys82. Residue His92 coordinates heme b. Cys93 bears the S-nitrosocysteine mark. At Lys144 the chain carries N6-acetyllysine.

It belongs to the globin family. In terms of assembly, heterotetramer of two alpha chains and two beta chains. In terms of tissue distribution, red blood cells.

Its function is as follows. Involved in oxygen transport from the lung to the various peripheral tissues. The sequence is that of Hemoglobin subunit beta from Tamias striatus (Eastern chipmunk).